Consider the following 121-residue polypeptide: UPF0102 protein BF0706 (121 aa).

Belongs to the UPF0102 family.

The polypeptide is UPF0102 protein BF0706 (Bacteroides fragilis (strain YCH46)).